Consider the following 1486-residue polypeptide: Chromosome partition protein MukB (1486 aa).

34–41 (GGNGAGKS) contributes to the ATP binding site. Coiled coils occupy residues 326 to 418 (LEAD…QYNQ), 444 to 480 (LETF…QAYQ), and 509 to 603 (RHLA…RAPV). The flexible hinge stretch occupies residues 666 to 783 (PGGSEDQRLN…EVPLFGRAAR (118 aa)). 3 coiled-coil regions span residues 835–923 (EAEI…AKLE), 977–1115 (EMLS…TAKA), and 1209–1266 (VEAI…QNVS).

This sequence belongs to the SMC family. MukB subfamily. As to quaternary structure, homodimerization via its hinge domain. Binds to DNA via its C-terminal region. Interacts, and probably forms a ternary complex, with MukE and MukF via its C-terminal region. The complex formation is stimulated by calcium or magnesium. Interacts with tubulin-related protein FtsZ.

The protein resides in the cytoplasm. It is found in the nucleoid. Functionally, plays a central role in chromosome condensation, segregation and cell cycle progression. Functions as a homodimer, which is essential for chromosome partition. Involved in negative DNA supercoiling in vivo, and by this means organize and compact chromosomes. May achieve or facilitate chromosome segregation by condensation DNA from both sides of a centrally located replisome during cell division. This Escherichia coli (strain K12 / MC4100 / BW2952) protein is Chromosome partition protein MukB.